A 587-amino-acid chain; its full sequence is Urease subunit alpha (587 aa).

The region spanning 134–572 (GGIDTHVHFI…LPLAQRYLYT (439 aa)) is the Urease domain. Residues His-139, His-141, and Lys-222 each contribute to the Ni(2+) site. Lys-222 carries the post-translational modification N6-carboxylysine. His-224 provides a ligand contact to substrate. Residues His-251 and His-277 each contribute to the Ni(2+) site. The active-site Proton donor is the His-325. Asp-365 serves as a coordination point for Ni(2+).

This sequence belongs to the metallo-dependent hydrolases superfamily. Urease alpha subunit family. As to quaternary structure, heterotrimer of UreA (gamma), UreB (beta) and UreC (alpha) subunits. Three heterotrimers associate to form the active enzyme. The cofactor is Ni cation. In terms of processing, carboxylation allows a single lysine to coordinate two nickel ions.

The protein resides in the cytoplasm. It catalyses the reaction urea + 2 H2O + H(+) = hydrogencarbonate + 2 NH4(+). Its pathway is nitrogen metabolism; urea degradation; CO(2) and NH(3) from urea (urease route): step 1/1. The polypeptide is Urease subunit alpha (Clostridium perfringens).